Reading from the N-terminus, the 207-residue chain is Outer-membrane lipoprotein carrier protein (207 aa).

The signal sequence occupies residues 1 to 21; the sequence is MRLIRMLLLPVLAVTTLSAHA.

It belongs to the LolA family. In terms of assembly, monomer.

Its subcellular location is the periplasm. Participates in the translocation of lipoproteins from the inner membrane to the outer membrane. Only forms a complex with a lipoprotein if the residue after the N-terminal Cys is not an aspartate (The Asp acts as a targeting signal to indicate that the lipoprotein should stay in the inner membrane). The chain is Outer-membrane lipoprotein carrier protein from Pseudomonas fluorescens (strain ATCC BAA-477 / NRRL B-23932 / Pf-5).